The chain runs to 327 residues: Flotillin-like protein FloA (327 aa).

A helical membrane pass occupies residues 7–27 (FLVPILIVILLLVFFSLVPVG).

This sequence belongs to the flotillin-like FloA family. Homooligomerizes.

The protein resides in the cell membrane. It localises to the membrane raft. Functionally, found in functional membrane microdomains (FMM) that may be equivalent to eukaryotic membrane rafts. FMMs are highly dynamic and increase in number as cells age. Flotillins are thought to be important factors in membrane fluidity. The polypeptide is Flotillin-like protein FloA (Finegoldia magna (strain ATCC 29328 / DSM 20472 / WAL 2508) (Peptostreptococcus magnus)).